The following is a 328-amino-acid chain: Malate dehydrogenase (328 aa).

Position 12 to 18 (12 to 18 (GAAGQIG)) interacts with NAD(+). Substrate contacts are provided by arginine 95 and arginine 101. NAD(+)-binding positions include asparagine 108, glutamine 115, and 132–134 (VGN). Positions 134 and 165 each coordinate substrate. Residue histidine 190 is the Proton acceptor of the active site.

This sequence belongs to the LDH/MDH superfamily. MDH type 2 family.

It catalyses the reaction (S)-malate + NAD(+) = oxaloacetate + NADH + H(+). Functionally, catalyzes the reversible oxidation of malate to oxaloacetate. The polypeptide is Malate dehydrogenase (Acidovorax ebreus (strain TPSY) (Diaphorobacter sp. (strain TPSY))).